Here is a 502-residue protein sequence, read N- to C-terminus: ATP synthase subunit alpha (502 aa).

Residue 169–176 (GDRQTGKT) participates in ATP binding.

The protein belongs to the ATPase alpha/beta chains family. As to quaternary structure, F-type ATPases have 2 components, CF(1) - the catalytic core - and CF(0) - the membrane proton channel. CF(1) has five subunits: alpha(3), beta(3), gamma(1), delta(1), epsilon(1). CF(0) has three main subunits: a(1), b(2) and c(9-12). The alpha and beta chains form an alternating ring which encloses part of the gamma chain. CF(1) is attached to CF(0) by a central stalk formed by the gamma and epsilon chains, while a peripheral stalk is formed by the delta and b chains.

Its subcellular location is the cell membrane. The catalysed reaction is ATP + H2O + 4 H(+)(in) = ADP + phosphate + 5 H(+)(out). Its function is as follows. Produces ATP from ADP in the presence of a proton gradient across the membrane. The alpha chain is a regulatory subunit. In Priestia megaterium (strain ATCC 12872 / QMB1551) (Bacillus megaterium), this protein is ATP synthase subunit alpha.